We begin with the raw amino-acid sequence, 158 residues long: Endoribonuclease YbeY (158 aa).

Residues His-119, His-123, and His-129 each coordinate Zn(2+).

It belongs to the endoribonuclease YbeY family. The cofactor is Zn(2+).

Its subcellular location is the cytoplasm. Its function is as follows. Single strand-specific metallo-endoribonuclease involved in late-stage 70S ribosome quality control and in maturation of the 3' terminus of the 16S rRNA. In Shewanella woodyi (strain ATCC 51908 / MS32), this protein is Endoribonuclease YbeY.